The primary structure comprises 529 residues: Scarecrow-like protein 13 (529 aa).

The span at 51–81 shows a compositional bias: polar residues; it reads ASGSLPSYDSPSVSITSGRSPFSPQGSQSCI. Residues 51-84 are disordered; it reads ASGSLPSYDSPSVSITSGRSPFSPQGSQSCISDL. Residues 146 to 525 enclose the GRAS domain; the sequence is LLALTPQLDL…RPMATCSVWK (380 aa). The tract at residues 153-213 is leucine repeat I (LRI); it reads LDLKEVLVEA…RARLEGSGSN (61 aa). A VHIID region spans residues 232–297; that stretch reads MSVLYEICPY…GGPPLLRVTG (66 aa). Positions 263–267 match the VHIID motif; it reads VHIID. A leucine repeat II (LRII) region spans residues 313–345; that stretch reads LVGERLATLAQSCGVPFEFHDAIMSGCKVQREH. A PFYRE region spans residues 354 to 448; that stretch reads VVVNFPYVLH…QHCVARDIVN (95 aa). The segment at 451 to 525 is SAW; the sequence is ACEESERVER…RPMATCSVWK (75 aa).

Belongs to the GRAS family. As to expression, expressed in roots, hypocotyls, cotyledons, shoot apex, leaves, flowers and siliques.

It is found in the cytoplasm. The protein localises to the nucleus. Its function is as follows. Probable transcription factor that acts as a positive regulator of continuous red light signals downstream of phytochrome B (phyB). Required for the regulation of hypocotyl elongation during de-etiolation. May be required to modulate phytochrome A (phyA) signal transduction in a phyB-independent way. The protein is Scarecrow-like protein 13 (SCL13) of Arabidopsis thaliana (Mouse-ear cress).